The chain runs to 61 residues: Small ribosomal subunit protein uS14 (61 aa).

Cys24, Cys27, Cys40, and Cys43 together coordinate Zn(2+).

The protein belongs to the universal ribosomal protein uS14 family. Zinc-binding uS14 subfamily. As to quaternary structure, part of the 30S ribosomal subunit. Contacts proteins S3 and S10. Zn(2+) is required as a cofactor.

Functionally, binds 16S rRNA, required for the assembly of 30S particles and may also be responsible for determining the conformation of the 16S rRNA at the A site. This is Small ribosomal subunit protein uS14 from Thermus aquaticus.